Consider the following 459-residue polypeptide: tRNA(Ile)-lysidine synthase (459 aa).

38–43 (SGGMDS) lines the ATP pocket.

The protein belongs to the tRNA(Ile)-lysidine synthase family.

Its subcellular location is the cytoplasm. The enzyme catalyses cytidine(34) in tRNA(Ile2) + L-lysine + ATP = lysidine(34) in tRNA(Ile2) + AMP + diphosphate + H(+). Functionally, ligates lysine onto the cytidine present at position 34 of the AUA codon-specific tRNA(Ile) that contains the anticodon CAU, in an ATP-dependent manner. Cytidine is converted to lysidine, thus changing the amino acid specificity of the tRNA from methionine to isoleucine. This Acinetobacter baylyi (strain ATCC 33305 / BD413 / ADP1) protein is tRNA(Ile)-lysidine synthase.